Here is a 178-residue protein sequence, read N- to C-terminus: ATP synthase subunit delta (178 aa).

Belongs to the ATPase delta chain family. F-type ATPases have 2 components, F(1) - the catalytic core - and F(0) - the membrane proton channel. F(1) has five subunits: alpha(3), beta(3), gamma(1), delta(1), epsilon(1). F(0) has three main subunits: a(1), b(2) and c(10-14). The alpha and beta chains form an alternating ring which encloses part of the gamma chain. F(1) is attached to F(0) by a central stalk formed by the gamma and epsilon chains, while a peripheral stalk is formed by the delta and b chains.

It is found in the cell membrane. Functionally, f(1)F(0) ATP synthase produces ATP from ADP in the presence of a proton or sodium gradient. F-type ATPases consist of two structural domains, F(1) containing the extramembraneous catalytic core and F(0) containing the membrane proton channel, linked together by a central stalk and a peripheral stalk. During catalysis, ATP synthesis in the catalytic domain of F(1) is coupled via a rotary mechanism of the central stalk subunits to proton translocation. This protein is part of the stalk that links CF(0) to CF(1). It either transmits conformational changes from CF(0) to CF(1) or is implicated in proton conduction. The polypeptide is ATP synthase subunit delta (Streptococcus equinus (Streptococcus bovis)).